Consider the following 153-residue polypeptide: Profilin (153 aa).

This sequence belongs to the profilin family. Occurs in many kinds of cells as a complex with monomeric actin in a 1:1 ratio.

It is found in the cytoplasm. Its subcellular location is the cytoskeleton. Its function is as follows. Binds to actin and affects the structure of the cytoskeleton. At high concentrations, profilin prevents the polymerization of actin, whereas it enhances it at low concentrations. By binding to PIP2, it inhibits the formation of IP3 and DG. This chain is Profilin, found in Tetrahymena pyriformis.